A 438-amino-acid polypeptide reads, in one-letter code: 3-phosphoshikimate 1-carboxyvinyltransferase (438 aa).

3-phosphoshikimate-binding residues include Lys21, Ser22, and Arg26. Lys21 contacts phosphoenolpyruvate. Positions 95 and 123 each coordinate phosphoenolpyruvate. Ser167, Gln169, Asp315, and Lys342 together coordinate 3-phosphoshikimate. Gln169 contributes to the phosphoenolpyruvate binding site. Asp315 serves as the catalytic Proton acceptor. Phosphoenolpyruvate-binding residues include Arg346 and Arg387.

Belongs to the EPSP synthase family. In terms of assembly, monomer.

It localises to the cytoplasm. The enzyme catalyses 3-phosphoshikimate + phosphoenolpyruvate = 5-O-(1-carboxyvinyl)-3-phosphoshikimate + phosphate. The protein operates within metabolic intermediate biosynthesis; chorismate biosynthesis; chorismate from D-erythrose 4-phosphate and phosphoenolpyruvate: step 6/7. Functionally, catalyzes the transfer of the enolpyruvyl moiety of phosphoenolpyruvate (PEP) to the 5-hydroxyl of shikimate-3-phosphate (S3P) to produce enolpyruvyl shikimate-3-phosphate and inorganic phosphate. This is 3-phosphoshikimate 1-carboxyvinyltransferase from Coxiella burnetii (strain CbuK_Q154) (Coxiella burnetii (strain Q154)).